Reading from the N-terminus, the 611-residue chain is Eukaryotic translation initiation factor 4B (611 aa).

Residues 1–13 (MAASAKKKNKKGK) are compositionally biased toward basic residues. Disordered regions lie at residues 1-37 (MAAS…VSKP), 66-93 (PPID…LPKS), and 173-611 (QAQD…DYAE). A compositionally biased stretch (basic and acidic residues) spans 79–89 (AAREPNIDRSR). Phosphoserine is present on S93. The region spanning 96–173 (YTAFLGNLPY…RRIRVDVADQ (78 aa)) is the RRM domain. Over residues 173-203 (QAQDKDRDDRSFGRDRNRDSDKTDTDWRARP) the composition is skewed to basic and acidic residues. 4 positions are modified to phosphoserine: S192, S207, S219, and S283. Residues 211 to 271 (YPPRRGDDSF…GSRDYDRGYD (61 aa)) are compositionally biased toward basic and acidic residues. Residues 285–328 (YRRDDDYRGGGDRYEDRYDRRDDRSWSSRDDYSRDDYRRDDRGP) show a composition bias toward basic and acidic residues. K343 participates in a covalent cross-link: Glycyl lysine isopeptide (Lys-Gly) (interchain with G-Cter in SUMO2). A compositionally biased stretch (low complexity) spans 348 to 359 (SASTSQSTRAAS). At S359 the chain carries Phosphoserine. At K365 the chain carries N6-acetyllysine. The segment covering 370-420 (AAREREVEERLQKEQEKLQRQLDEPKLERRPRERHPSWRSEETQERERSRT) has biased composition (basic and acidic residues). Position 406 is a phosphoserine; by RPS6KA1 (S406). S409 bears the Phosphoserine mark. T412 bears the Phosphothreonine mark. S418 is subject to Phosphoserine. Positions 421–435 (GSESSQTGTSTTSSR) are enriched in low complexity. Residue S422 is modified to Phosphoserine; by RPS6KA1 and RPS6KB1. Residues S425, S445, S459, S462, S497, and S498 each carry the phosphoserine modification. The segment covering 439–458 (RRESEKSLENETLNKEEDCH) has biased composition (basic and acidic residues). Positions 487–506 (RSSNPPARSQSSDTEQQSPT) are enriched in polar residues. Residue T500 is modified to Phosphothreonine. A Phosphoserine modification is found at S504. T506 carries the post-translational modification Phosphothreonine. 2 stretches are compositionally biased toward basic and acidic residues: residues 521–530 (GPGRKDENKV) and 551–583 (GNRD…EENP). Residues 584–597 (ASKFSSASKYAALS) are compositionally biased toward low complexity. At K586 the chain carries N6-acetyllysine. S597 is modified (phosphoserine). Over residues 599–611 (DGEDENEGEDYAE) the composition is skewed to acidic residues.

As to quaternary structure, self-associates and interacts with EIF3 p170 subunit. Post-translationally, phosphorylated at Ser-422 by RPS6KA1 and RPS6KB1; phosphorylation enhances the affinity of EIF4B for the EIF3 complex. In response to mTORC1 activation, RPS6KA1-mediated phosphorylation at 'Ser-406' and 'Ser-422' stimulates bicarbonate cotransporter SLC4A7 mRNA translation, increasing SLC4A7 protein abundance and function.

Required for the binding of mRNA to ribosomes. Functions in close association with EIF4-F and EIF4-A. Binds near the 5'-terminal cap of mRNA in presence of EIF-4F and ATP. Promotes the ATPase activity and the ATP-dependent RNA unwinding activity of both EIF4-A and EIF4-F. The sequence is that of Eukaryotic translation initiation factor 4B (EIF4B) from Homo sapiens (Human).